A 431-amino-acid chain; its full sequence is DNA polymerase delta subunit 2 (431 aa).

The protein belongs to the DNA polymerase delta/II small subunit family. Component of both the DNA polymerase delta and DNA polymerase zeta complexes. The DNA polymerase delta complex consisting of three subunits: the catalytic subunit PolD1 and two accessory subunits PolD2/Pol31 and PolD3/Pol32. Within the delta complex, interacts with both PolD1 and PolD3, and is able to interact with PolD1 in the absence of PolD3. Component of the DNA polymerase zeta complex consisting of four subunits: the catalytic subunit PolZ1 and three accessory subunits PolZ2/Rev7, PolD2/Pol31 and PolD3/Pol32. Expressed in ovaries and embryos (at the protein level).

The protein resides in the nucleus. It localises to the nucleoplasm. Functionally, accessory component of both the DNA polymerase delta complex and possibly the DNA polymerase zeta complex. As a component of the delta complex, participates in high fidelity genome replication, including lagging strand synthesis, DNA recombination and repair. Appears to promote the function of the DNA pol-delta complex accessory subunit PolD3 in both embryonic and postembryonic somatic cells. The chain is DNA polymerase delta subunit 2 from Drosophila melanogaster (Fruit fly).